Reading from the N-terminus, the 324-residue chain is MSNEVEQKKNIKTINDLPGISQTVINKLIEAGYSSLETLAVASPQDLSVAAGIPLSTAQKIIKEARDALDIRFKTALEVKKERMNVKKISTGSQALDGLLAGGIETRTMTEFFGEFGSGKTQLCHQLSVNVQLPPEKGGLSGKAVYIDTEGTFRWERIENMAKALGLDIDNVMNNIYYIRAINTDHQIAIVDDLQELVSKDPSIKLIVVDSVTSHFRAEYPGRENLAVRQQKLNKHLHQLTRLAEVYDIAVIITNQVMARPDMFYGDPTVAVGGHTLYHVPGIRIQLKKSRGNRRIARVVDAPHLPEGEVVFALTEEGIRDAEE.

114-121 contacts ATP; that stretch reads GEFGSGKT.

This sequence belongs to the eukaryotic RecA-like protein family.

Functionally, involved in DNA repair and in homologous recombination. Binds and assemble on single-stranded DNA to form a nucleoprotein filament. Hydrolyzes ATP in a ssDNA-dependent manner and promotes DNA strand exchange between homologous DNA molecules. The polypeptide is DNA repair and recombination protein RadA (radA) (Saccharolobus solfataricus (strain ATCC 35092 / DSM 1617 / JCM 11322 / P2) (Sulfolobus solfataricus)).